We begin with the raw amino-acid sequence, 601 residues long: Elongation factor 4 (601 aa).

In terms of domain architecture, tr-type G spans 6–188 (DHIRNFSIVA…AIVHQLPPPR (183 aa)). GTP-binding positions include 18-23 (DHGKST) and 135-138 (NKVD).

This sequence belongs to the TRAFAC class translation factor GTPase superfamily. Classic translation factor GTPase family. LepA subfamily.

The protein resides in the cell inner membrane. The enzyme catalyses GTP + H2O = GDP + phosphate + H(+). Functionally, required for accurate and efficient protein synthesis under certain stress conditions. May act as a fidelity factor of the translation reaction, by catalyzing a one-codon backward translocation of tRNAs on improperly translocated ribosomes. Back-translocation proceeds from a post-translocation (POST) complex to a pre-translocation (PRE) complex, thus giving elongation factor G a second chance to translocate the tRNAs correctly. Binds to ribosomes in a GTP-dependent manner. This Mesorhizobium japonicum (strain LMG 29417 / CECT 9101 / MAFF 303099) (Mesorhizobium loti (strain MAFF 303099)) protein is Elongation factor 4.